The sequence spans 306 residues: Lymphotoxin-beta (306 aa).

The Cytoplasmic segment spans residues 1-27 (MGTRGLQGLGGRPQGRGCLLLAVAGAT). The helical; Signal-anchor for type II membrane protein transmembrane segment at 28-48 (SLVTLLLAVPITVLAVLALVP) threads the bilayer. Over 49–306 (QDQGRRVEKI…KTFFGAVMVG (258 aa)) the chain is Extracellular. 2 disordered regions span residues 63 to 112 (AQAQ…GPVA) and 127 to 151 (PAAD…DLNP). The segment covering 74-85 (PSCILPSPSSLS) has biased composition (low complexity). Over residues 95 to 112 (QRSNASRNLASTSQGPVA) the composition is skewed to polar residues. The N-linked (GlcNAc...) asparagine glycan is linked to Asn-98. The THD domain occupies 154–305 (PAAHLIGAWM…GKTFFGAVMV (152 aa)). The N-linked (GlcNAc...) asparagine glycan is linked to Asn-284.

The protein belongs to the tumor necrosis factor family. In terms of assembly, heterotrimer of either two LTB and one LTA subunits or (less prevalent) two LTA and one LTB subunits.

It is found in the membrane. Its function is as follows. Cytokine that binds to LTBR/TNFRSF3. May play a specific role in immune response regulation. Provides the membrane anchor for the attachment of the heterotrimeric complex to the cell surface. The protein is Lymphotoxin-beta (Ltb) of Mus musculus (Mouse).